The primary structure comprises 548 residues: Mercuric reductase (548 aa).

Positions 1-65 constitute an HMA domain; the sequence is MTEITVNGMT…AIAALGYQGS (65 aa). A metal cation-binding residues include cysteine 11 and cysteine 14. FAD is bound by residues alanine 97, glycine 117, and threonine 122. A disulfide bond links cysteine 123 and cysteine 128. FAD-binding residues include lysine 132, alanine 198, aspartate 390, and valine 398. Positions 545 and 546 each coordinate Hg(2+).

The protein belongs to the class-I pyridine nucleotide-disulfide oxidoreductase family. As to quaternary structure, homodimer. It depends on FAD as a cofactor.

The enzyme catalyses Hg + NADP(+) + H(+) = Hg(2+) + NADPH. In terms of biological role, resistance to Hg(2+) in bacteria appears to be governed by a specialized system which includes mercuric reductase. MerA protein is responsible for volatilizing mercury as Hg(0). The chain is Mercuric reductase (merA) from Pseudomonas fluorescens.